Reading from the N-terminus, the 479-residue chain is Probable cytosol aminopeptidase (479 aa).

Mn(2+) is bound by residues Lys-251 and Asp-256. Lys-263 is a catalytic residue. Residues Asp-274, Asp-333, and Glu-335 each contribute to the Mn(2+) site. The active site involves Arg-337.

This sequence belongs to the peptidase M17 family. The cofactor is Mn(2+).

The protein localises to the cytoplasm. It carries out the reaction Release of an N-terminal amino acid, Xaa-|-Yaa-, in which Xaa is preferably Leu, but may be other amino acids including Pro although not Arg or Lys, and Yaa may be Pro. Amino acid amides and methyl esters are also readily hydrolyzed, but rates on arylamides are exceedingly low.. The enzyme catalyses Release of an N-terminal amino acid, preferentially leucine, but not glutamic or aspartic acids.. Presumably involved in the processing and regular turnover of intracellular proteins. Catalyzes the removal of unsubstituted N-terminal amino acids from various peptides. This is Probable cytosol aminopeptidase from Albidiferax ferrireducens (strain ATCC BAA-621 / DSM 15236 / T118) (Rhodoferax ferrireducens).